A 158-amino-acid polypeptide reads, in one-letter code: NAD(P)H-quinone oxidoreductase subunit J, chloroplastic (158 aa).

Belongs to the complex I 30 kDa subunit family. In terms of assembly, NDH is composed of at least 16 different subunits, 5 of which are encoded in the nucleus.

It is found in the plastid. It localises to the chloroplast thylakoid membrane. The enzyme catalyses a plastoquinone + NADH + (n+1) H(+)(in) = a plastoquinol + NAD(+) + n H(+)(out). It catalyses the reaction a plastoquinone + NADPH + (n+1) H(+)(in) = a plastoquinol + NADP(+) + n H(+)(out). In terms of biological role, NDH shuttles electrons from NAD(P)H:plastoquinone, via FMN and iron-sulfur (Fe-S) centers, to quinones in the photosynthetic chain and possibly in a chloroplast respiratory chain. The immediate electron acceptor for the enzyme in this species is believed to be plastoquinone. Couples the redox reaction to proton translocation, and thus conserves the redox energy in a proton gradient. This Platanus occidentalis (Sycamore) protein is NAD(P)H-quinone oxidoreductase subunit J, chloroplastic.